The primary structure comprises 199 residues: Recombination protein RecR (199 aa).

A C4-type zinc finger spans residues Cys-57–Cys-72. The 96-residue stretch at Asp-81–Pro-176 folds into the Toprim domain.

It belongs to the RecR family.

Its function is as follows. May play a role in DNA repair. It seems to be involved in an RecBC-independent recombinational process of DNA repair. It may act with RecF and RecO. In Shewanella halifaxensis (strain HAW-EB4), this protein is Recombination protein RecR.